A 230-amino-acid polypeptide reads, in one-letter code: Acyl-protein thioesterase 1 (230 aa).

Residues Ser-119, Asp-174, and His-208 each act as charge relay system in the active site. The residue at position 224 (Lys-224) is an N6-acetyllysine.

This sequence belongs to the AB hydrolase superfamily. AB hydrolase 2 family. As to quaternary structure, homodimer. As to expression, platelets.

The protein localises to the cytoplasm. It is found in the cell membrane. Its subcellular location is the nucleus membrane. It localises to the endoplasmic reticulum. The catalysed reaction is S-hexadecanoyl-L-cysteinyl-[protein] + H2O = L-cysteinyl-[protein] + hexadecanoate + H(+). It catalyses the reaction 1-hexadecanoyl-sn-glycero-3-phosphocholine + H2O = sn-glycerol 3-phosphocholine + hexadecanoate + H(+). It carries out the reaction a 1-(9Z-octadecenoyl)-2-acyl-sn-glycero-3-phosphocholine + H2O = a 2-acyl-sn-glycero-3-phosphocholine + (9Z)-octadecenoate + H(+). With respect to regulation, inhibited by palmostatin-B, leading to impair depalmitoylating of Ras. Acts as an acyl-protein thioesterase. Hydrolyzes fatty acids from S-acylated cysteine residues in proteins such as trimeric G alpha proteins or HRAS. Acts as a palmitoyl thioesterase that catalyzes depalmitoylation of proteins, such as ADRB2, KCNMA1 and SQSTM1. Acts as a negative regulator of autophagy by mediating palmitoylation of SQSTM1, decreasing affinity between SQSTM1 and ATG8 proteins and recruitment of ubiquitinated cargo proteins to autophagosomes. Acts as a lysophospholipase and hydrolyzes lysophosphatidylcholine (lyso-PC). Also hydrolyzes lysophosphatidylethanolamine (lyso-PE), lysophosphatidylinositol (lyso-PI) and lysophosphatidylserine (lyso-PS). Has much higher thioesterase activity than lysophospholipase activity. Contributes to the production of lysophosphatidic acid (LPA) during blood coagulation by recognizing and cleaving plasma phospholipids to generate lysophospholipids which in turn act as substrates for ENPP2 to produce LPA. The protein is Acyl-protein thioesterase 1 (LYPLA1) of Homo sapiens (Human).